A 124-amino-acid polypeptide reads, in one-letter code: MALNKEDILTWLEGAKTMEVVDLVTAIEEKFGVTAAVAAGVGGAVSAGSADSEEQTEFDVILMSFGDSKINVIKEVRAITGLGLGEAKALVEAAPKAIKEGLSKSDAEELKKKLEAVGAKVEVK.

Belongs to the bacterial ribosomal protein bL12 family. As to quaternary structure, homodimer. Part of the ribosomal stalk of the 50S ribosomal subunit. Forms a multimeric L10(L12)X complex, where L10 forms an elongated spine to which 2 to 4 L12 dimers bind in a sequential fashion. Binds GTP-bound translation factors.

Functionally, forms part of the ribosomal stalk which helps the ribosome interact with GTP-bound translation factors. Is thus essential for accurate translation. The sequence is that of Large ribosomal subunit protein bL12 from Borreliella burgdorferi (strain ZS7) (Borrelia burgdorferi).